Reading from the N-terminus, the 324-residue chain is Alkanal monooxygenase beta chain (324 aa).

The protein belongs to the bacterial luciferase oxidoreductase family. As to quaternary structure, heterodimer of an alpha and a beta chain.

It carries out the reaction a long-chain fatty aldehyde + FMNH2 + O2 = a long-chain fatty acid + hnu + FMN + H2O + 2 H(+). Functionally, light-emitting reaction in luminous bacteria. The specific role of the beta subunit is unknown, but it is absolutely required for bioluminescence activity. This is Alkanal monooxygenase beta chain (luxB) from Photorhabdus laumondii subsp. laumondii (strain DSM 15139 / CIP 105565 / TT01) (Photorhabdus luminescens subsp. laumondii).